A 202-amino-acid chain; its full sequence is uncharacterized protein (202 aa).

A helical membrane pass occupies residues 18 to 38 (FLIFLIFLSVLGCGITISGCI).

It is found in the membrane. This is an uncharacterized protein from Methanocaldococcus jannaschii (strain ATCC 43067 / DSM 2661 / JAL-1 / JCM 10045 / NBRC 100440) (Methanococcus jannaschii).